A 244-amino-acid chain; its full sequence is Carboxy-S-adenosyl-L-methionine synthase (244 aa).

S-adenosyl-L-methionine-binding positions include Tyr-40, 65 to 67 (GCS), 90 to 91 (DN), Asn-134, and Arg-201.

This sequence belongs to the class I-like SAM-binding methyltransferase superfamily. Cx-SAM synthase family. In terms of assembly, homodimer.

The catalysed reaction is prephenate + S-adenosyl-L-methionine = carboxy-S-adenosyl-L-methionine + 3-phenylpyruvate + H2O. Catalyzes the conversion of S-adenosyl-L-methionine (SAM) to carboxy-S-adenosyl-L-methionine (Cx-SAM). This chain is Carboxy-S-adenosyl-L-methionine synthase, found in Citrifermentans bemidjiense (strain ATCC BAA-1014 / DSM 16622 / JCM 12645 / Bem) (Geobacter bemidjiensis).